The chain runs to 772 residues: Acetamidase regulatory protein (772 aa).

The span at 1 to 16 (MSSTAQKNSLSPTGNG) shows a compositional bias: polar residues. Residues 1 to 23 (MSSTAQKNSLSPTGNGVTKRKSG) are disordered. Positions 26–59 (ACVHCHRRKVRCDARIVGLPCSNCRSSGKTDCRI) form a DNA-binding region, zn(2)-C6 fungal-type. Disordered stretches follow at residues 78–99 (RCRP…TISE), 114–148 (AAAP…QECH), and 627–690 (ATSE…QTAV). The segment covering 114–123 (AAAPPASVAP) has biased composition (low complexity). Polar residues-rich tracts occupy residues 124 to 144 (NVQS…SPQA) and 634 to 658 (PFSS…QHSS). Low complexity predominate over residues 671–686 (LLPSYDSPTPDSTSLP).

Its subcellular location is the nucleus. Functionally, positively regulates the expression of genes involved in the catabolism of certain amides, omega amino acids, and lactams. This chain is Acetamidase regulatory protein (amdR), found in Aspergillus fumigatus (strain ATCC MYA-4609 / CBS 101355 / FGSC A1100 / Af293) (Neosartorya fumigata).